Consider the following 121-residue polypeptide: Ribonuclease CL2 (121 aa).

Substrate is bound by residues Lys6 and Arg9. His11 acts as the Proton acceptor in catalysis. Cystine bridges form between Cys26/Cys81, Cys42/Cys92, and Cys60/Cys107. Residues 43–47 (KPSNT) and Arg82 contribute to the substrate site. The active-site Proton donor is His114.

This sequence belongs to the pancreatic ribonuclease family.

Its subcellular location is the secreted. Pyrimidine-specific nuclease with preference for C. The protein is Ribonuclease CL2 of Gallus gallus (Chicken).